Reading from the N-terminus, the 252-residue chain is Mitochondrial peculiar membrane protein 1 (252 aa).

The segment at 230–252 is disordered; it reads TTTTSKGSSPQVKHKVVSVDEDN.

Its subcellular location is the mitochondrion membrane. The protein is Mitochondrial peculiar membrane protein 1 (MPM1) of Saccharomyces cerevisiae (strain ATCC 204508 / S288c) (Baker's yeast).